Consider the following 264-residue polypeptide: Shikimate dehydrogenase (NADP(+)) (264 aa).

Shikimate contacts are provided by residues 14–16 and Thr-59; that span reads SLS. Lys-63 acts as the Proton acceptor in catalysis. Glu-75 serves as a coordination point for NADP(+). Shikimate is bound by residues Asn-84 and Asp-99. Residues 122-126, 144-149, and Ile-205 contribute to the NADP(+) site; these read GAGGA and NRTPSK. Tyr-207 lines the shikimate pocket. An NADP(+)-binding site is contributed by Gly-228.

The protein belongs to the shikimate dehydrogenase family. In terms of assembly, homodimer.

It catalyses the reaction shikimate + NADP(+) = 3-dehydroshikimate + NADPH + H(+). The protein operates within metabolic intermediate biosynthesis; chorismate biosynthesis; chorismate from D-erythrose 4-phosphate and phosphoenolpyruvate: step 4/7. Functionally, involved in the biosynthesis of the chorismate, which leads to the biosynthesis of aromatic amino acids. Catalyzes the reversible NADPH linked reduction of 3-dehydroshikimate (DHSA) to yield shikimate (SA). This chain is Shikimate dehydrogenase (NADP(+)), found in Pyrococcus abyssi (strain GE5 / Orsay).